A 594-amino-acid polypeptide reads, in one-letter code: Sucrose transport protein SUC3 (594 aa).

Ser-2 bears the N-acetylserine mark. Over Ser-2–Cys-58 the chain is Cytoplasmic. The tract at residues Val-23–Asp-50 is disordered. A compositionally biased stretch (low complexity) spans Ser-31–Ser-46. Residues Ser-59–Leu-79 traverse the membrane as a helical segment. At Gln-80–Ser-98 the chain is on the extracellular side. The helical transmembrane segment at Ser-99–Trp-119 threads the bilayer. The Cytoplasmic portion of the chain corresponds to Ser-120–Arg-131. A helical transmembrane segment spans residues Pro-132–Ala-152. Topologically, residues Asp-153–Arg-174 are extracellular. Residues Ala-175–Gly-195 traverse the membrane as a helical segment. Residues Pro-196–Asn-214 are Cytoplasmic-facing. Residues Ala-215 to Gly-235 form a helical membrane-spanning segment. The Extracellular segment spans residues Lys-236–Lys-257. Residues Ala-258–Ala-278 form a helical membrane-spanning segment. Topologically, residues Lys-279–Ala-365 are cytoplasmic. A helical transmembrane segment spans residues Met-366 to Phe-386. The Extracellular segment spans residues Asp-387 to Gly-417. The helical transmembrane segment at Ala-418–Met-438 threads the bilayer. At Cys-439 to Arg-445 the chain is on the cytoplasmic side. Residues Val-446 to Ser-466 form a helical membrane-spanning segment. Topologically, residues Leu-467–Thr-489 are extracellular. N-linked (GlcNAc...) asparagine glycosylation occurs at Asn-484. The chain crosses the membrane as a helical span at residues Ala-490–Phe-510. Topologically, residues Ser-511–Gly-525 are cytoplasmic. Residues Leu-526 to Ala-546 traverse the membrane as a helical segment. Residues Gly-547–Gly-555 lie on the Extracellular side of the membrane. Residues Gly-556–Leu-576 traverse the membrane as a helical segment. Topologically, residues Gln-577–Gly-594 are cytoplasmic.

The protein belongs to the glycoside-pentoside-hexuronide (GPH) cation symporter transporter (TC 2.A.2.4) family. As to quaternary structure, homodimer. Interacts with SUC2 and SUC4. Mostly localized in parenchymatic cells next to vascular tissues (at protein level). Present in stipules, trichomes, hydathodes and guard cells of source leaves, as well as in lateral root tips and flowers.

Its subcellular location is the cell membrane. The enzyme catalyses sucrose(out) + H(+)(out) = sucrose(in) + H(+)(in). The protein operates within glycan biosynthesis; sucrose metabolism. With respect to regulation, inhibited by protonophores (e.g. dinitrophenol and carbonyl cyanide m-chlorophenyl-hydrazone (CCCP)) and SH group inhibitors (e.g. p-chloromercuribenzene sulphonic acid (PCMBS)). Functionally, responsible for the transport of sucrose into the cell, with the concomitant uptake of protons (symport system). Can also transport maltose at a lesser rate. May also transport biotin. Probably involved in carpel maturation that leads to pod shatter and seed dispersal. This chain is Sucrose transport protein SUC3, found in Arabidopsis thaliana (Mouse-ear cress).